Reading from the N-terminus, the 308-residue chain is Olfactory receptor 6F1 (308 aa).

Over 1 to 25 (MDTGNKTLPQDFLLLGFPGSQTLQL) the chain is Extracellular. Residue asparagine 5 is glycosylated (N-linked (GlcNAc...) asparagine). Residues 26-46 (SLFMLFLVMYILTVSGNVAIL) form a helical membrane-spanning segment. The Cytoplasmic segment spans residues 47-54 (MLVSTSHQ). The chain crosses the membrane as a helical span at residues 55–75 (LHTPMYFFLSNLSFLEIWYTT). The Extracellular portion of the chain corresponds to 76-99 (AAVPKALAILLGRSQTISFTSCLL). Residues cysteine 97 and cysteine 189 are joined by a disulfide bond. A helical transmembrane segment spans residues 100–120 (QMYFVFSLGCTEYFLLAAMAY). Residues 121-139 (DRCLAICYPLHYGAIMSSL) lie on the Cytoplasmic side of the membrane. Residues 140–160 (LSAQLALGSWVCGFVAIAVPT) traverse the membrane as a helical segment. Residues 161–197 (ALISGLSFCGPRAINHFFCDIAPWIALACTNTQAVEL) are Extracellular-facing. Residues 198 to 217 (VAFVIAVVVILSSCLITFVS) form a helical membrane-spanning segment. Residues 218 to 237 (YVYIISTILRIPSASGRSKA) lie on the Cytoplasmic side of the membrane. Residues 238–258 (FSTCSSHLTVVLIWYGSTVFL) traverse the membrane as a helical segment. The Extracellular portion of the chain corresponds to 259-271 (HVRTSIKDALDLI). A helical membrane pass occupies residues 272 to 292 (KAVHVLNTVVTPVLNPFIYTL). Topologically, residues 293–308 (RNKEVRETLLKKWKGK) are cytoplasmic.

It belongs to the G-protein coupled receptor 1 family.

Its subcellular location is the cell membrane. In terms of biological role, odorant receptor. The sequence is that of Olfactory receptor 6F1 (OR6F1) from Homo sapiens (Human).